The chain runs to 306 residues: Probable cobalamin biosynthesis protein CobD (306 aa).

6 consecutive transmembrane segments (helical) span residues 17 to 37, 54 to 74, 88 to 108, 155 to 175, 207 to 227, and 286 to 306; these read IGEP…IIFF, LFGF…AYEI, ISLY…IEFS, ITDS…PGAF, ILNF…APFY, and SLKA…VLLM.

The protein belongs to the CobD/CbiB family.

Its subcellular location is the cell membrane. It participates in cofactor biosynthesis; adenosylcobalamin biosynthesis. Converts cobyric acid to cobinamide by the addition of aminopropanol on the F carboxylic group. The polypeptide is Probable cobalamin biosynthesis protein CobD (Methanococcus maripaludis (strain C5 / ATCC BAA-1333)).